Reading from the N-terminus, the 298-residue chain is Lipoyl synthase (298 aa).

The [4Fe-4S] cluster site is built by Cys40, Cys45, Cys51, Cys67, Cys71, Cys74, and Ser280. One can recognise a Radical SAM core domain in the interval 53 to 269 (AVRRTATFMI…KEIAMQKGFS (217 aa)).

Belongs to the radical SAM superfamily. Lipoyl synthase family. Requires [4Fe-4S] cluster as cofactor.

It is found in the cytoplasm. The catalysed reaction is [[Fe-S] cluster scaffold protein carrying a second [4Fe-4S](2+) cluster] + N(6)-octanoyl-L-lysyl-[protein] + 2 oxidized [2Fe-2S]-[ferredoxin] + 2 S-adenosyl-L-methionine + 4 H(+) = [[Fe-S] cluster scaffold protein] + N(6)-[(R)-dihydrolipoyl]-L-lysyl-[protein] + 4 Fe(3+) + 2 hydrogen sulfide + 2 5'-deoxyadenosine + 2 L-methionine + 2 reduced [2Fe-2S]-[ferredoxin]. It participates in protein modification; protein lipoylation via endogenous pathway; protein N(6)-(lipoyl)lysine from octanoyl-[acyl-carrier-protein]. In terms of biological role, catalyzes the radical-mediated insertion of two sulfur atoms into the C-6 and C-8 positions of the octanoyl moiety bound to the lipoyl domains of lipoate-dependent enzymes, thereby converting the octanoylated domains into lipoylated derivatives. In Bacillus velezensis (strain DSM 23117 / BGSC 10A6 / LMG 26770 / FZB42) (Bacillus amyloliquefaciens subsp. plantarum), this protein is Lipoyl synthase.